Consider the following 455-residue polypeptide: Ribulose bisphosphate carboxylase large chain (455 aa).

Residue lysine 5 is modified to N6,N6,N6-trimethyllysine. Residues asparagine 114 and threonine 164 each contribute to the substrate site. Lysine 166 (proton acceptor) is an active-site residue. Lysine 168 contributes to the substrate binding site. Residues lysine 192, aspartate 194, and glutamate 195 each coordinate Mg(2+). Residue lysine 192 is modified to N6-carboxylysine. The Proton acceptor role is filled by histidine 285. Residues arginine 286, histidine 318, and serine 370 each contribute to the substrate site.

Belongs to the RuBisCO large chain family. Type I subfamily. As to quaternary structure, heterohexadecamer of 8 large chains and 8 small chains; disulfide-linked. The disulfide link is formed within the large subunit homodimers. Mg(2+) is required as a cofactor. In terms of processing, the disulfide bond which can form in the large chain dimeric partners within the hexadecamer appears to be associated with oxidative stress and protein turnover.

It is found in the plastid. The protein resides in the chloroplast. It catalyses the reaction 2 (2R)-3-phosphoglycerate + 2 H(+) = D-ribulose 1,5-bisphosphate + CO2 + H2O. The enzyme catalyses D-ribulose 1,5-bisphosphate + O2 = 2-phosphoglycolate + (2R)-3-phosphoglycerate + 2 H(+). In terms of biological role, ruBisCO catalyzes two reactions: the carboxylation of D-ribulose 1,5-bisphosphate, the primary event in carbon dioxide fixation, as well as the oxidative fragmentation of the pentose substrate in the photorespiration process. Both reactions occur simultaneously and in competition at the same active site. The polypeptide is Ribulose bisphosphate carboxylase large chain (Lupinus latifolius (Broad-leaved lupine)).